Here is a 476-residue protein sequence, read N- to C-terminus: Ribosomal RNA small subunit methyltransferase F (476 aa).

Residues 125–131 (AAAPGSK), Glu-149, Asp-176, and Asp-194 contribute to the S-adenosyl-L-methionine site. The Nucleophile role is filled by Cys-247.

Belongs to the class I-like SAM-binding methyltransferase superfamily. RsmB/NOP family.

The protein localises to the cytoplasm. It catalyses the reaction cytidine(1407) in 16S rRNA + S-adenosyl-L-methionine = 5-methylcytidine(1407) in 16S rRNA + S-adenosyl-L-homocysteine + H(+). Functionally, specifically methylates the cytosine at position 1407 (m5C1407) of 16S rRNA. In Aeromonas salmonicida (strain A449), this protein is Ribosomal RNA small subunit methyltransferase F.